An 814-amino-acid chain; its full sequence is Outer membrane usher protein SefC (814 aa).

Positions 1–30 (MKKTTITLFVLTSVFHSGNVFSRQYNFDYG) are cleaved as a signal peptide. A disulfide bridge connects residues cysteine 792 and cysteine 813.

This sequence belongs to the fimbrial export usher family.

Its subcellular location is the cell outer membrane. In terms of biological role, involved in the export and assembly of the SefA fimbrial subunit. The chain is Outer membrane usher protein SefC (sefC) from Salmonella enteritidis.